The primary structure comprises 120 residues: FK506-binding protein 1A (120 aa).

One can recognise a PPIase FKBP-type domain in the interval Gly26–Lys114.

This sequence belongs to the FKBP-type PPIase family. FKBP1 subfamily.

The protein localises to the cytoplasm. The catalysed reaction is [protein]-peptidylproline (omega=180) = [protein]-peptidylproline (omega=0). Functionally, PPIases accelerate the folding of proteins. It catalyzes the cis-trans isomerization of proline imidic peptide bonds in oligopeptides. The protein is FK506-binding protein 1A (fkr-2) of Neurospora crassa (strain ATCC 24698 / 74-OR23-1A / CBS 708.71 / DSM 1257 / FGSC 987).